Here is a 363-residue protein sequence, read N- to C-terminus: G kinase-anchoring protein 1-B (363 aa).

Disordered regions lie at residues 17 to 79 (ALLK…RNLA) and 147 to 182 (VNGD…VPLK). Residues 50 to 79 (KTNVNEKKKEKRRKKKEQQQSEANELRNLA) adopt a coiled-coil conformation. Basic residues predominate over residues 160-170 (KVNKKDKRKNN). 2 coiled-coil regions span residues 249 to 298 (DGKT…QEGE) and 328 to 348 (AALE…VRYQ).

The protein belongs to the GKAP1 family.

Its subcellular location is the golgi apparatus. In terms of biological role, may play a role in the regulation of insulin-dependent IRS1 tyrosine phosphorylation in adipocytes. In Xenopus laevis (African clawed frog), this protein is G kinase-anchoring protein 1-B (gkap1-b).